The sequence spans 216 residues: Large ribosomal subunit protein uL3 (216 aa).

Positions 135–156 (LGASHGTQRKHRSPGSIGGCAT) are disordered.

This sequence belongs to the universal ribosomal protein uL3 family. In terms of assembly, part of the 50S ribosomal subunit. Forms a cluster with proteins L14 and L19.

Its function is as follows. One of the primary rRNA binding proteins, it binds directly near the 3'-end of the 23S rRNA, where it nucleates assembly of the 50S subunit. In Thermobifida fusca (strain YX), this protein is Large ribosomal subunit protein uL3.